Here is a 20-residue protein sequence, read N- to C-terminus: DnaJ homolog subfamily C member 1 (20 aa).

Topologically, residues 1–20 (WESGDLELFDLVEEVXLNFY) are lumenal. A J domain is found at 18 to 20 (NFY).

As to quaternary structure, interacts (via SANT 2 domain) with SERPINA3; the interaction delays the formation of the covalent inhibitory complex SERPINA3-chymotrypsin, but does not alter the catalytic activity of SERPINA3. Interacts (via SANT 2 domain) with ITIH4 (via C-terminus); the interaction protects ITIH4 against in vitro cleavage by kallikrein. Interacts (via J domain) with HSPA5. Interacts (via cytosolic domain) with ribosomes.

The protein resides in the endoplasmic reticulum membrane. Its subcellular location is the nucleus membrane. It is found in the microsome membrane. This is DnaJ homolog subfamily C member 1 (DNAJC1) from Canis lupus familiaris (Dog).